A 262-amino-acid chain; its full sequence is Adenosylcobinamide-GDP ribazoletransferase (262 aa).

Transmembrane regions (helical) follow at residues 41–61 (AFPL…FILG), 65–85 (ASSL…TGAL), 115–132 (IGTY…LRVS), 134–156 (LAAF…TAAL), and 195–215 (GVLL…AVWL).

It belongs to the CobS family. Mg(2+) is required as a cofactor.

The protein localises to the cell inner membrane. The enzyme catalyses alpha-ribazole + adenosylcob(III)inamide-GDP = adenosylcob(III)alamin + GMP + H(+). The catalysed reaction is alpha-ribazole 5'-phosphate + adenosylcob(III)inamide-GDP = adenosylcob(III)alamin 5'-phosphate + GMP + H(+). It functions in the pathway cofactor biosynthesis; adenosylcobalamin biosynthesis; adenosylcobalamin from cob(II)yrinate a,c-diamide: step 7/7. Its function is as follows. Joins adenosylcobinamide-GDP and alpha-ribazole to generate adenosylcobalamin (Ado-cobalamin). Also synthesizes adenosylcobalamin 5'-phosphate from adenosylcobinamide-GDP and alpha-ribazole 5'-phosphate. In Rhizobium meliloti (strain 1021) (Ensifer meliloti), this protein is Adenosylcobinamide-GDP ribazoletransferase.